The chain runs to 354 residues: Glycine betaine/proline betaine transport system permease protein ProW (354 aa).

A disordered region spans residues 1-41 (MADQNNPWDTTPAADSAAQSADAWGTPTTAPTDGGGADWLT). Residues 1 to 99 (MADQNNPWDT…VDYILNGFQQ (99 aa)) are Cytoplasmic-facing. Over residues 13–32 (AADSAAQSADAWGTPTTAPT) the composition is skewed to low complexity. The chain crosses the membrane as a helical span at residues 100–120 (LLLGMPAPVAIIVFALIAWQI). Ser121 is a topological domain (periplasmic). The helical transmembrane segment at 122–142 (GVGMGVATLVSLIAIGAIGAW) threads the bilayer. Topologically, residues 143–148 (SQAMVT) are cytoplasmic. In terms of domain architecture, ABC transmembrane type-1 spans 145-324 (AMVTLALVLT…ILAIILDRLT (180 aa)). A helical membrane pass occupies residues 149 to 169 (LALVLTALLFCIVIGLPLGIW). At 170–198 (LARSPRAAKIIRPLLDAMQTTPAFVYLVP) the chain is on the periplasmic side. The helical transmembrane segment at 199–219 (IVMLFGIGNVPGVVVTIIFAL) threads the bilayer. Residues 220–270 (PPIIRLTILGINQVPADLIEASRSFGASPRQMLFKVQLPLAMPTIMAGVNQ) are Cytoplasmic-facing. Residues 271–291 (TLMLALSMVVIASMIAVGGLG) form a helical membrane-spanning segment. Over 292–300 (QMVLRGIGR) the chain is Periplasmic. The chain crosses the membrane as a helical span at residues 301-321 (LDMGLATVGGVGIVILAIILD). Residues 322 to 354 (RLTQAVGRDSRSRGNRRWYTTGPVGLLTRPFIK) lie on the Cytoplasmic side of the membrane.

The protein belongs to the binding-protein-dependent transport system permease family. CysTW subfamily. In terms of assembly, the complex is composed of two ATP-binding proteins (ProV), two transmembrane proteins (ProW) and a solute-binding protein (ProX).

The protein resides in the cell inner membrane. Its function is as follows. Part of the ProU ABC transporter complex involved in glycine betaine and proline betaine uptake. Probably responsible for the translocation of the substrate across the membrane. This Escherichia coli (strain K12) protein is Glycine betaine/proline betaine transport system permease protein ProW.